The primary structure comprises 852 residues: DNA mismatch repair protein MutS (852 aa).

602–609 (GPNMSGKS) lines the ATP pocket.

The protein belongs to the DNA mismatch repair MutS family.

Its function is as follows. This protein is involved in the repair of mismatches in DNA. It is possible that it carries out the mismatch recognition step. This protein has a weak ATPase activity. The chain is DNA mismatch repair protein MutS from Streptococcus thermophilus (strain ATCC BAA-250 / LMG 18311).